Consider the following 245-residue polypeptide: Terpene cyclase prhH (245 aa).

The next 7 membrane-spanning stretches (helical) occupy residues 17–37, 51–71, 76–96, 113–133, 138–158, 170–190, and 205–225; these read ILAISEVLKVVAAVGWSVNYI, IGILPLCCDIGWEFVYAWMFP, HWQGVVRVWFFLHSAVLLVTL, IVFIYIFVTLVFGAGQYALAA, ALGFHWGGALCQFLSSSCGIA, SYLIWFARAISTFAGFIKLCI, and PMCWFYIVTVLSFDAAYPFLY.

It belongs to the paxB family.

Its subcellular location is the membrane. It participates in secondary metabolite biosynthesis; terpenoid biosynthesis. Its function is as follows. Terpene cyclase; part of the gene cluster that mediates the biosynthesis of paraherquonin, a meroterpenoid with a unique, highly congested hexacyclic molecular architecture. The first step of the pathway is the synthesis of 3,5-dimethylorsellinic acid (DMOA) by the polyketide synthase prhL. Synthesis of DMOA is followed by farnesylation by the prenyltransferase prhE, methylesterification by the methyl-transferase prhM, epoxidation of the prenyl chain by the flavin-dependent monooxygenase prhF, and cyclization of the farnesyl moiety by the terpene cyclase prhH, to yield the tetracyclic intermediate, protoaustinoid A. The short chain dehydrogenase prhI then oxidizes the C-3 alcohol group of the terpene cyclase product to transform protoaustinoid A into protoaustinoid B. The FAD-binding monooxygenase prhJ catalyzes the oxidation of protoaustinoid B into preaustinoid A which is further oxidized into preaustinoid A1 by FAD-binding monooxygenase phrK. Finally, prhA leads to berkeleydione via the berkeleyone B intermediate. PrhA is a multifunctional dioxygenase that first desaturates at C5-C6 to form berkeleyone B, followed by rearrangement of the A/B-ring to form the cycloheptadiene moiety in berkeleydione. Berkeleydione serves as the key intermediate for the biosynthesis of paraherquonin as well as many other meroterpenoids. The cytochrome P450 monooxygenases prhB, prhD, and prhN, as well as the isomerase prhC, are probably involved in the late stage of paraherquonin biosynthesis, after the production of berkeleydione. Especially prhC might be a multifunctional enzyme that catalyzes the D-ring expansion via intramolecular methoxy rearrangement, as well as the hydrolysis of the expanded D-ring. The chain is Terpene cyclase prhH from Penicillium brasilianum.